We begin with the raw amino-acid sequence, 641 residues long: Chaperone protein DnaK (641 aa).

T200 is modified (phosphothreonine; by autocatalysis). Positions A602–S611 are enriched in low complexity. The tract at residues A602–A641 is disordered. The span at E630 to A641 shows a compositional bias: basic and acidic residues.

The protein belongs to the heat shock protein 70 family.

Acts as a chaperone. This is Chaperone protein DnaK from Methylacidiphilum infernorum (isolate V4) (Methylokorus infernorum (strain V4)).